We begin with the raw amino-acid sequence, 244 residues long: 7-cyano-7-deazaguanine synthase (244 aa).

14–24 (FSGGQDSATCV) provides a ligand contact to ATP. Zn(2+) is bound by residues Cys-202, Cys-217, Cys-220, and Cys-223.

The protein belongs to the QueC family. The cofactor is Zn(2+).

It carries out the reaction 7-carboxy-7-deazaguanine + NH4(+) + ATP = 7-cyano-7-deazaguanine + ADP + phosphate + H2O + H(+). It functions in the pathway purine metabolism; 7-cyano-7-deazaguanine biosynthesis. In terms of biological role, catalyzes the ATP-dependent conversion of 7-carboxy-7-deazaguanine (CDG) to 7-cyano-7-deazaguanine (preQ(0)). The sequence is that of 7-cyano-7-deazaguanine synthase from Burkholderia lata (strain ATCC 17760 / DSM 23089 / LMG 22485 / NCIMB 9086 / R18194 / 383).